The following is a 91-amino-acid chain: DNA-binding protein HRL18 (91 aa).

The protein belongs to the bacterial histone-like protein family.

Histone-like DNA-binding protein which is capable of wrapping DNA to stabilize it, and thus to prevent its denaturation under extreme environmental conditions. This chain is DNA-binding protein HRL18, found in Rhizobium leguminosarum.